The sequence spans 356 residues: 4-hydroxybenzoate polyprenyltransferase, mitochondrial (356 aa).

A mitochondrion-targeting transit peptide spans 1–44 (MITRSIGIARRSNSINCIVGSNTSTSYSLDESTKRWISTSTKQP). 6 helical membrane-spanning segments follow: residues 71-91 (VDKP…IAMA), 93-113 (PAGQ…AFLM), 150-170 (AIGL…QLNW), 195-215 (WPQF…WCAL), 269-289 (WLSA…IASD), and 332-352 (IILF…QILI).

This sequence belongs to the UbiA prenyltransferase family. The cofactor is Mg(2+).

It localises to the mitochondrion inner membrane. The enzyme catalyses an all-trans-polyprenyl diphosphate + 4-hydroxybenzoate = a 4-hydroxy-3-(all-trans-polyprenyl)benzoate + diphosphate. The protein operates within cofactor biosynthesis; ubiquinone biosynthesis. Its function is as follows. Catalyzes the prenylation of para-hydroxybenzoate (PHB) with an all-trans polyprenyl group. Mediates the second step in the final reaction sequence of coenzyme Q (CoQ) biosynthesis, which is the condensation of the polyisoprenoid side chain with PHB, generating the first membrane-bound Q intermediate. This Caenorhabditis elegans protein is 4-hydroxybenzoate polyprenyltransferase, mitochondrial (coq-2).